The sequence spans 245 residues: Small ribosomal subunit protein uS2 (245 aa).

The protein belongs to the universal ribosomal protein uS2 family.

The chain is Small ribosomal subunit protein uS2 from Dehalococcoides mccartyi (strain CBDB1).